The sequence spans 179 residues: MSRIGNRILKVPANTEVVIENNHITVKGKLGELHYSFSSLIKVNLENGEITTVRSNEEKTTKQLHGTTNAIIKNMLIGVSEGYKKEIEIKGVGYKATLKGNEIEVIAGYSHPVTLALPSNLKVELPKPTNIIISGIDKQAVGEFAANLRKIRKPSPYSGKGIMYKDEQIRRKEGKTASK.

It belongs to the universal ribosomal protein uL6 family. As to quaternary structure, part of the 50S ribosomal subunit.

This protein binds to the 23S rRNA, and is important in its secondary structure. It is located near the subunit interface in the base of the L7/L12 stalk, and near the tRNA binding site of the peptidyltransferase center. The sequence is that of Large ribosomal subunit protein uL6 from Metamycoplasma arthritidis (strain 158L3-1) (Mycoplasma arthritidis).